Consider the following 480-residue polypeptide: Cytochrome c oxidase subunit 1 (480 aa).

The chain crosses the membrane as a helical span at residues 22 to 42 (ISYLWLAYWFGMIGFYMSVLI). Positions 45 and 50 each coordinate Ca(2+). A run of 8 helical transmembrane segments spans residues 64-84 (LLFTLHGLIMVFFNIMTGLFG), 109-129 (SLLLQPIGFVLVVSSVYLEIG), 151-171 (LIIFGLLAAGIASTLSSINFI), 194-214 (IVLTSFLLLLSLPVVTAVFLM), 240-260 (LFWFFGHPEVYIMILPGFGII), 278-298 (MILAMGSIALLGCLVWGHHMY), 309-329 (YFTTVTILIALPTGNKIFNWV), and 343-363 (LILFAVLFIVNFVIGGTTGVV). H69 provides a ligand contact to Fe(II)-heme a. H246 provides a ligand contact to Cu cation. Residues 246 to 250 (HPEVY) constitute a cross-link (1'-histidyl-3'-tyrosine (His-Tyr)). Y250 contacts O2. Positions 295 and 296 each coordinate Cu cation. Mg(2+) contacts are provided by H374 and D375. Residue H382 participates in heme a3 binding. Transmembrane regions (helical) follow at residues 382–402 (HFHFVLSIGAIISLICFIVYI) and 416–436 (LSLMAPIFMIAVLFTFLPMHF). Position 384 (H384) interacts with Fe(II)-heme a. Ca(2+) is bound at residue P447. The chain crosses the membrane as a helical span at residues 458–478 (FICTLGATMMLVLKLTVLFII).

This sequence belongs to the heme-copper respiratory oxidase family. Component of the cytochrome c oxidase (complex IV, CIV), a multisubunit enzyme composed of a catalytic core of 3 subunits and several supernumerary subunits. The complex exists as a monomer or a dimer and forms supercomplexes (SCs) in the inner mitochondrial membrane with ubiquinol-cytochrome c oxidoreductase (cytochrome b-c1 complex, complex III, CIII). Heme serves as cofactor. It depends on Cu cation as a cofactor.

It is found in the mitochondrion inner membrane. The catalysed reaction is 4 Fe(II)-[cytochrome c] + O2 + 8 H(+)(in) = 4 Fe(III)-[cytochrome c] + 2 H2O + 4 H(+)(out). The protein operates within energy metabolism; oxidative phosphorylation. Functionally, component of the cytochrome c oxidase, the last enzyme in the mitochondrial electron transport chain which drives oxidative phosphorylation. The respiratory chain contains 3 multisubunit complexes succinate dehydrogenase (complex II, CII), ubiquinol-cytochrome c oxidoreductase (cytochrome b-c1 complex, complex III, CIII) and cytochrome c oxidase (complex IV, CIV), that cooperate to transfer electrons derived from NADH and succinate to molecular oxygen, creating an electrochemical gradient over the inner membrane that drives transmembrane transport and the ATP synthase. Cytochrome c oxidase is the component of the respiratory chain that catalyzes the reduction of oxygen to water. Electrons originating from reduced cytochrome c in the intermembrane space (IMS) are transferred via the dinuclear copper A center (CU(A)) of subunit 2 and heme A of subunit 1 to the active site in subunit 1, a binuclear center (BNC) formed by heme A3 and copper B (CU(B)). The BNC reduces molecular oxygen to 2 water molecules using 4 electrons from cytochrome c in the IMS and 4 protons from the mitochondrial matrix. In Theileria annulata, this protein is Cytochrome c oxidase subunit 1 (MT-CO1).